The primary structure comprises 102 residues: Small ribosomal subunit protein uS10 (102 aa).

The protein belongs to the universal ribosomal protein uS10 family. In terms of assembly, part of the 30S ribosomal subunit.

In terms of biological role, involved in the binding of tRNA to the ribosomes. The polypeptide is Small ribosomal subunit protein uS10 (Chlorobium phaeobacteroides (strain BS1)).